The primary structure comprises 150 residues: Large ribosomal subunit protein bL9 (150 aa).

It belongs to the bacterial ribosomal protein bL9 family.

Its function is as follows. Binds to the 23S rRNA. The sequence is that of Large ribosomal subunit protein bL9 from Pseudoalteromonas translucida (strain TAC 125).